A 359-amino-acid chain; its full sequence is Short chain dehydrogenase resG (359 aa).

Lys-87, Asp-110, Asn-137, Tyr-237, and Lys-241 together coordinate NADP(+). The Proton donor role is filled by Tyr-237. Lys-241 functions as the Lowers pKa of active site Tyr in the catalytic mechanism.

The protein belongs to the short-chain dehydrogenases/reductases (SDR) family.

The protein operates within antifungal biosynthesis. Its function is as follows. Short chain dehydrogenase; part of the gene cluster that mediates the biosynthesis of the tetrahydropyranyl antifungal agent restricticin that acts as an inhibitor of CYP51 and blocks the ergosterol biosynthesis. The highly reducing polyketide synthase resH, the short chain dehydrogenase resG, the cyclase resF, the FAD-dependent monooxygenase resA and the enoylreductase resD are required to generate the first stable intermediate desmethylrestrictinol. ResH with resD biosynthesize the first polyketide chain intermediate that is reduced by resG, followed by epoxidation by resA before 6-endo cyclization via epoxide opening by resF leads to desmethylrestrictinol. The methyltransferase resE then catalyzes the C4 O-methylation of desmethylrestrictinol to produce restrictinol, and the nonribosomal peptide synthetase resC catalyzes the C3 esterification of restrictinol with glycine that leads to restricticin. In Aspergillus sclerotiorum, this protein is Short chain dehydrogenase resG.